The primary structure comprises 1051 residues: Transcription intermediary factor 1-alpha (1051 aa).

The tract at residues 1 to 42 is disordered; it reads MEVAVEKAAAAAAPAGGPAAAAPSGENEAESRQGPDSESGGE. A Glycyl lysine isopeptide (Lys-Gly) (interchain with G-Cter in SUMO2) cross-link involves residue lysine 7. Low complexity predominate over residues 8 to 23; that stretch reads AAAAAAPAGGPAAAAP. Residues 52–77 form an RING-type zinc finger; that stretch reads CAVCHQNIQSRVPKLLPCLHSFCQRC. Residues 94-115 are disordered; it reads SAETPPPAPAPAPAPGSPAGGP. Threonine 97 carries the phosphothreonine modification. Pro residues predominate over residues 97–109; it reads TPPPAPAPAPAPG. Serine 110 is modified (phosphoserine). 2 B box-type zinc fingers span residues 158 to 211 and 218 to 259; these read KSNQ…VSPE and QRPV…YQFI. Positions 163, 166, 187, and 200 each coordinate Zn(2+). Residue lysine 205 forms a Glycyl lysine isopeptide (Lys-Gly) (interchain with G-Cter in SUMO2) linkage. Cysteine 223, histidine 226, cysteine 246, and histidine 251 together coordinate Zn(2+). A Glycyl lysine isopeptide (Lys-Gly) (interchain with G-Cter in SUMO2) cross-link involves residue lysine 276. Residues 289-359 are a coiled coil; it reads NQIQNRIIEI…AGLSKQLEHV (71 aa). Residues 429 to 457 form a disordered region; it reads ESQPQMPKQNPVVEQSSQPPGGLPSNQLS. A compositionally biased stretch (polar residues) spans 431 to 457; it reads QPQMPKQNPVVEQSSQPPGGLPSNQLS. Glycyl lysine isopeptide (Lys-Gly) (interchain with G-Cter in SUMO2) cross-links involve residues lysine 436 and lysine 458. The residue at position 469 (arginine 469) is an Omega-N-methylarginine. Low complexity-rich tracts occupy residues 479-490 and 501-510; these read AQRQQVQRRPAP and PIQQPSISHQ. The segment at 479–551 is disordered; the sequence is AQRQQVQRRP…PSQNVPRQTT (73 aa). Positions 526-535 are enriched in pro residues; that stretch reads PNGPVLPPYP. Residues 538 to 551 are compositionally biased toward polar residues; the sequence is LRYSPSQNVPRQTT. Residues lysine 553 and lysine 642 each participate in a glycyl lysine isopeptide (Lys-Gly) (interchain with G-Cter in SUMO2) cross-link. The disordered stretch occupies residues 644–713; sequence TGVDHAQPRP…PAGADSTHKV (70 aa). Phosphoserine is present on residues serine 655, serine 661, and serine 668. The segment covering 655-667 has biased composition (polar residues); sequence SNRTVQSPNSSVP. The span at 686–708 shows a compositional bias: low complexity; it reads SPSASSVGSRGSSGSSSKPAGAD. Glycyl lysine isopeptide (Lys-Gly) (interchain with G-Cter in SUMO2) cross-links involve residues lysine 703 and lysine 712. Residues lysine 724 and lysine 742 each participate in a glycyl lysine isopeptide (Lys-Gly) (interchain with G-Cter in SUMO); alternate cross-link. A Glycyl lysine isopeptide (Lys-Gly) (interchain with G-Cter in SUMO1); alternate cross-link involves residue lysine 724. Glycyl lysine isopeptide (Lys-Gly) (interchain with G-Cter in SUMO2); alternate cross-links involve residues lysine 724 and lysine 742. Residues serine 745 and serine 769 each carry the phosphoserine modification. A nuclear receptor binding site (NRBS) region spans residues 755–780; sequence NYPRSILTSLLLNSSQSSASEETVLR. The disordered stretch occupies residues 771 to 827; that stretch reads SSASEETVLRSDAPDSTGDQPGLHQENSSNGKSEWSDASQKSPVHVGETRKEDDPNE. Over residues 795 to 812 the composition is skewed to polar residues; sequence QENSSNGKSEWSDASQKS. A Glycyl lysine isopeptide (Lys-Gly) (interchain with G-Cter in SUMO2) cross-link involves residue lysine 802. Position 809 is a phosphoserine (serine 809). Lysine 811 is covalently cross-linked (Glycyl lysine isopeptide (Lys-Gly) (interchain with G-Cter in SUMO2)). At serine 812 the chain carries Phosphoserine. The residue at position 819 (threonine 819) is a Phosphothreonine. Residues 827-874 form a PHD-type zinc finger; that stretch reads EDWCAVCQNGGELLCCEKCPKVFHLTCHVPTLTNFPSGEWICTFCRDL. The tract at residues 835–841 is interaction with histone H3 that is not methylated at 'Lys-4' (H3K4me0); sequence NGGELLC. Lysine 876 participates in a covalent cross-link: Glycyl lysine isopeptide (Lys-Gly) (interchain with G-Cter in SUMO2). A Nuclear localization signal motif is present at residues 892–908; it reads KRKSEGLTKLTPIDKRK. Positions 900-1005 constitute a Bromo domain; sequence KLTPIDKRKC…SYFEELLKNL (106 aa). Residues lysine 950 and lysine 993 each participate in a glycyl lysine isopeptide (Lys-Gly) (interchain with G-Cter in SUMO2) cross-link. The interval 1024 to 1051 is disordered; it reads KFSDDSDDDFVQPRKKRLKSTEDRQLLK. 2 positions are modified to phosphoserine: serine 1026 and serine 1029. Lysine 1042 participates in a covalent cross-link: Glycyl lysine isopeptide (Lys-Gly) (interchain with G-Cter in SUMO2). Residues 1042 to 1051 show a composition bias toward basic and acidic residues; sequence KSTEDRQLLK. Serine 1043 carries the post-translational modification Phosphoserine.

In terms of assembly, interacts (via bromo domain) with histone H3 (via N-terminus), provided that it is not methylated at 'Lys-4' (H3K4me0). Does not interact with histone H3 that is methylated at 'Lys-4' (H3K4me1, H3K4me2 or H3K4me3). Interacts (via bromo domain) with histone H3 (via N-terminus) that is acetylated at 'Lys-23' (H3K23ac). Has the highest affinity for histone H3 that is both unmodified at 'Lys-4' (H3K4me0) and acetylated at 'Lys-23' (H3K23ac). Has very low affinity for histone H3 that is methylated at 'Lys-9' (H3K9me), or acetylated at both 'Lys-9' (H3K9ac) and 'Lys-14' (H3K14ac), or acetylated at 'Lys-27' (H3K27ac) (in vitro). Interacts with TRIM16. Interacts with NR3C2/MCR. Interacts with the ligand-binding domain of estrogen receptors (in vitro). Interaction with DNA-bound estrogen receptors requires the presence of estradiol. Interacts with AR, CARM1, KAT5/TIP60, NCOA2/GRIP1, BRD7, CBX1, CBX3 and CBX5. Part of a coactivator complex containing TRIM24, NCOA2/GRIP1 and CARM1. Interacts with p53/TP53 and PML. Sumoylated. Post-translationally, phosphorylated at Ser-768 by ATM kinase induces ubiquitination and degradation during DNA damage. In terms of processing, undergoes ubiquitination-mediated degradation in response to DNA damage. In terms of tissue distribution, detected in embryonic and adult liver. Detected in zygote and throughout embryogenesis (at protein level). Detected in all adult tissues, with the highest expression level in testis.

It localises to the nucleus. The protein resides in the cytoplasm. The catalysed reaction is S-ubiquitinyl-[E2 ubiquitin-conjugating enzyme]-L-cysteine + [acceptor protein]-L-lysine = [E2 ubiquitin-conjugating enzyme]-L-cysteine + N(6)-ubiquitinyl-[acceptor protein]-L-lysine.. The protein operates within protein modification; protein ubiquitination. Functionally, transcriptional coactivator that interacts with numerous nuclear receptors and coactivators and modulates the transcription of target genes. Interacts with chromatin depending on histone H3 modifications, having the highest affinity for histone H3 that is both unmodified at 'Lys-4' (H3K4me0) and acetylated at 'Lys-23' (H3K23ac). Has E3 protein-ubiquitin ligase activity. Promotes ubiquitination and proteasomal degradation of p53/TP53. Plays a role in the regulation of cell proliferation and apoptosis via its effects on p53/TP53 levels. Up-regulates ligand-dependent transcription activation by AR, GCR/NR3C1, thyroid hormone receptor (TR) and ESR1. Modulates transcription activation by retinoic acid (RA) receptors, such as RARA. Plays a role in regulating retinoic acid-dependent proliferation of hepatocytes. Required for normal transition from proliferating neonatal hepatocytes to quiescent adult hepatocytes. Transcriptional coactivator that interacts with numerous nuclear receptors and coactivators and modulates the transcription of target genes. Interacts with chromatin depending on histone H3 modifications, having the highest affinity for histone H3 that is both unmodified at 'Lys-4' (H3K4me0) and acetylated at 'Lys-23' (H3K23ac). Has E3 protein-ubiquitin ligase activity. During the DNA damage response, participates in an autoregulatory feedback loop with TP53. Early in response to DNA damage, ATM kinase phosphorylates TRIM24 leading to its ubiquitination and degradation. After sufficient DNA repair has occurred, TP53 activates TRIM24 transcription, ultimately leading to TRIM24-mediated TP53 ubiquitination and degradation. Plays a role in the regulation of cell proliferation and apoptosis, at least in part via its effects on p53/TP53 levels. Up-regulates ligand-dependent transcription activation by AR, GCR/NR3C1, thyroid hormone receptor (TR) and ESR1. Modulates transcription activation by retinoic acid (RA) receptors, including RARA. Plays a role in regulating retinoic acid-dependent proliferation of hepatocytes. Also participates in innate immunity by mediating the specific 'Lys-63'-linked ubiquitination of TRAF3 leading to activation of downstream signal transduction of the type I IFN pathway. Additionally, negatively regulates NLRP3/CASP1/IL-1beta-mediated pyroptosis and cell migration probably by ubiquitinating NLRP3. This is Transcription intermediary factor 1-alpha (Trim24) from Mus musculus (Mouse).